The sequence spans 240 residues: Adenylate dimethylallyltransferase (240 aa).

It belongs to the isopentenyl transferase family.

The enzyme catalyses dimethylallyl diphosphate + AMP = N(6)-(dimethylallyl)adenosine 5'-phosphate + diphosphate. In terms of biological role, transfers dimethylallyl groups to AMP as part of the biosynthesis of cytokinin phytohormones. The protein is Adenylate dimethylallyltransferase (izt) of Agrobacterium fabrum (strain C58 / ATCC 33970) (Agrobacterium tumefaciens (strain C58)).